Here is a 189-residue protein sequence, read N- to C-terminus: Photosystem I assembly protein Ycf4 (189 aa).

A run of 2 helical transmembrane segments spans residues 25 to 45 (SVYF…LAGL) and 62 to 82 (LVFI…SLAG).

The protein belongs to the Ycf4 family.

The protein localises to the cellular thylakoid membrane. Its function is as follows. Seems to be required for the assembly of the photosystem I complex. This chain is Photosystem I assembly protein Ycf4, found in Synechococcus sp. (strain JA-2-3B'a(2-13)) (Cyanobacteria bacterium Yellowstone B-Prime).